Here is a 107-residue protein sequence, read N- to C-terminus: Circadian clock oscillator protein KaiB (107 aa).

Belongs to the KaiB family. As to quaternary structure, may undergo a major conformational rearrangment; in the free state forms homooligomers. When bound to KaiC switches to a monomeric thioredoxin-fold (KaiB(fs)). The active oscillator complex is probably KaiC(6):KaiB(6).

Its function is as follows. Component of the KaiBC clock protein complex, which constitutes the main circadian regulator in cyanobacteria; it may modify the ATPase activity of KaiC. In terms of biological role, may be a metamorphic protein which reversibly switches between an inactive tetrameric fold and a rare, thioredoxin-like monomeric fold (KaiB(fs)). KaiB(fs) binds phospho-KaiC, and perhaps clock output effectors. The protein is Circadian clock oscillator protein KaiB of Prochlorococcus marinus (strain NATL2A).